Here is a 398-residue protein sequence, read N- to C-terminus: O-methyltransferase hmp5 (398 aa).

S-adenosyl-L-methionine is bound by residues glycine 233 to glycine 234, glutamate 261, and aspartate 283 to phenylalanine 284. Histidine 303 (proton acceptor) is an active-site residue.

Belongs to the class I-like SAM-binding methyltransferase superfamily. Cation-independent O-methyltransferase family.

The protein operates within secondary metabolite biosynthesis. In terms of biological role, O-methyltransferase; part of the gene cluster that mediates the biosynthesis of hypothemycin, a resorcylic acid lactone (RAL) that irreversibly inhibits a subset of protein kinases with a conserved cysteine in the ATP binding site such as human ERK2. The first step is performed by both PKSs hmp3 and hmp8 and leads to the production of 7',8'-dehydrozearalenol (DHZ). The highly reducing PKS hpm8 synthesizes the reduced hexaketide (7S,11S,2E,8E)-7,11-dihydroxy-dodeca-2,8-dienoate, which is transferred downstream to the non-reducing PKS hpm3. Hpm3 then extends the reduced hexaketide to a nonaketide, after which regioselective cyclization and macrolactonization affords DHZ. The next step is the conversion of DHZ into aigialomycin C and is performed by the O-methyltransferase hmp5, the FAD-binding monooxygenase hmp7, and the cytochrome P450 monooxygenase hmp1. The wide substrate tolerance of the hmp5 and hmp7 implies that the reactions from DHZ to aigialomycin C can occur in any order. The steps from aigialomycin C to hypothemycin are less well established. The FAD-linked oxidoreductase hmp9 presumably catalyzes oxidation of the C-6' hydroxyl to a ketone. The timing of this oxidation is important, since the resulting enone functional group is a Michael acceptor that can react spontaneously with glutathione, an abundant metabolite in fungal cells. The glutathione S-transferase hmp2 catalyzes cis-trans isomerization of the 7',8' double bond with equilibrium favoring the trans isomer. The hpm6-encoded transporter might preferentially pump hypothemycin out of the cell relative to the trans isomer aigialomycin A. The cis-to-trans isomerization may be coupled with C-4' hydroxylation, since all known hypothemycin analogs containing the enone functional group also have hydroxyl groups at both C-4' and C-5'. This chain is O-methyltransferase hmp5, found in Hypomyces subiculosus (Nectria subiculosa).